Consider the following 72-residue polypeptide: MKQGIHPKYETLKVSCSCGHTFETRSTRSEDLHLDVCSECHPFYTGKQRVMDTGGRVDKFKKRFGALGKKDS.

Zn(2+)-binding residues include cysteine 16, cysteine 18, cysteine 37, and cysteine 40.

This sequence belongs to the bacterial ribosomal protein bL31 family. Type A subfamily. In terms of assembly, part of the 50S ribosomal subunit. Zn(2+) serves as cofactor.

Binds the 23S rRNA. The sequence is that of Large ribosomal subunit protein bL31 from Idiomarina loihiensis (strain ATCC BAA-735 / DSM 15497 / L2-TR).